The primary structure comprises 89 residues: DNA/RNA-binding protein Alba 2 (89 aa).

Lysine 12 is subject to N6-acetyllysine. Lysine 14, aspartate 18, and aspartate 22 together coordinate Zn(2+).

The protein belongs to the histone-like Alba family. As to quaternary structure, forms homodimers and homotetramers. Homodimer at pH below 6.0. Forms homotetramers and higher order homooligomers at near the growth temperature of 80 degrees Celsius and pH 7.0. Interacts with Alba 1; heterodimers lack cooperative DNA-binding behavior and result in more compact chromatin structures compared to Alba 1 homodimers. Post-translationally, acetylated. Acetylation at Lys-12 decreases DNA-binding affinity.

It is found in the cytoplasm. Its subcellular location is the chromosome. Binds single-stranded DNA, RNA and double-stranded DNA. Involved in DNA compaction. The chain is DNA/RNA-binding protein Alba 2 from Saccharolobus solfataricus (strain ATCC 35092 / DSM 1617 / JCM 11322 / P2) (Sulfolobus solfataricus).